The sequence spans 135 residues: DNA-binding protein H-NS homolog (135 aa).

Residues 112–117 (QGRTPS) mediate DNA binding.

Belongs to the histone-like protein H-NS family. Homodimer that oligomerizes on DNA into higher-order complexes that form bridges between disparate regions of DNA compacting it.

The protein resides in the cytoplasm. It localises to the nucleoid. A DNA-binding protein implicated in transcriptional repression and chromosome organization and compaction. Binds nucleation sites in AT-rich DNA and bridges them, forming higher-order nucleoprotein complexes and condensing the chromosome. A subset of genes are repressed by H-NS in association with other proteins. The sequence is that of DNA-binding protein H-NS homolog (hns) from Buchnera aphidicola subsp. Acyrthosiphon pisum (strain APS) (Acyrthosiphon pisum symbiotic bacterium).